The following is a 396-amino-acid chain: Elongation factor Tu (396 aa).

Positions 10-206 (KPHVNVGTIG…ALDTYIPTPE (197 aa)) constitute a tr-type G domain. The G1 stretch occupies residues 19-26 (GHVDHGKT). Residue 19–26 (GHVDHGKT) coordinates GTP. Residue T26 participates in Mg(2+) binding. Residues 60 to 64 (GITIN) are G2. The tract at residues 81 to 84 (DCPG) is G3. GTP is bound by residues 81–85 (DCPGH) and 136–139 (NKCD). The G4 stretch occupies residues 136 to 139 (NKCD). The G5 stretch occupies residues 174-176 (SAK).

The protein belongs to the TRAFAC class translation factor GTPase superfamily. Classic translation factor GTPase family. EF-Tu/EF-1A subfamily. As to quaternary structure, monomer.

The protein localises to the cytoplasm. The enzyme catalyses GTP + H2O = GDP + phosphate + H(+). Functionally, GTP hydrolase that promotes the GTP-dependent binding of aminoacyl-tRNA to the A-site of ribosomes during protein biosynthesis. In Burkholderia mallei (strain NCTC 10247), this protein is Elongation factor Tu.